Consider the following 224-residue polypeptide: Peptide deformylase 3 (224 aa).

2 residues coordinate Fe cation: Cys135 and His177. The active site involves Glu178. Position 181 (His181) interacts with Fe cation.

Belongs to the polypeptide deformylase family. It depends on Fe(2+) as a cofactor.

The enzyme catalyses N-terminal N-formyl-L-methionyl-[peptide] + H2O = N-terminal L-methionyl-[peptide] + formate. Removes the formyl group from the N-terminal Met of newly synthesized proteins. Requires at least a dipeptide for an efficient rate of reaction. N-terminal L-methionine is a prerequisite for activity but the enzyme has broad specificity at other positions. This chain is Peptide deformylase 3, found in Streptomyces avermitilis (strain ATCC 31267 / DSM 46492 / JCM 5070 / NBRC 14893 / NCIMB 12804 / NRRL 8165 / MA-4680).